Consider the following 239-residue polypeptide: Small ribosomal subunit protein uS2 (239 aa).

The protein belongs to the universal ribosomal protein uS2 family.

The sequence is that of Small ribosomal subunit protein uS2 from Parasynechococcus marenigrum (strain WH8102).